We begin with the raw amino-acid sequence, 202 residues long: Prohormone-4 (202 aa).

A signal peptide spans 1-28 (MVQRLCTSVAALSLALSACVFFPRAVMA). The LDL-receptor class A domain maps to 46–86 (ACRPYEPFKCPGDDTCISIQYLCDGAPDCQDGYDEDSRLCT). Cystine bridges form between Cys47-Cys61, Cys55-Cys74, and Cys68-Cys85.

The protein localises to the secreted. The polypeptide is Prohormone-4 (Apis mellifera (Honeybee)).